The primary structure comprises 500 residues: MDTLLKTPNKLEFLHPVHGFSVKASSFNSVKPHKFGSRKICENWGKGVCVKAKSSALLELVPETKKENLDFELPMYDPSKGLVVDLAVVGGGPAGLAVAQQVSEAGLSVVSIDPSPKLIWPNNYGVWVDEFEAMDLLDCLDATWSGTVVYIDDNTTKDLDRPYGRVNRKQLKSKMMQKCILNGVKFHHAKVIKVIHEEAKSMLICNDGVTIQATVVLDATGFSRCLVQYDKPYKPGYQVAYGILAEVEEHPFDTSKMVLMDWRDSHLGNNMELKERNRKVPTFLYAMPFSSNKIFLEETSLVARPGLRMDDIQERMVARLNHLGIKVKSIEEDEHCVIPMGGSLPVIPQRVVGTGGTAGLVHPSTGYMVARTLAAAPVVANAIIHYLGSEKDLLGNELSAAVWKDLWPIERRRQREFFCFGMDILLKLDLPATRRFFDAFFDLEPRYWHGFLSSRLYLPELIFFGLSLFSRASNTSRIEIMTKGTLPLVNMINNLLQDTE.

The transit peptide at Met1–Gly81 directs the protein to the chloroplast. Leu86–Pro114 contributes to the NAD(+) binding site.

This sequence belongs to the lycopene cyclase family.

Its subcellular location is the plastid. The protein resides in the chloroplast. It catalyses the reaction a carotenoid psi-end group = a carotenoid beta-end derivative. Its pathway is carotenoid biosynthesis; beta-carotene biosynthesis. The protein operates within carotenoid biosynthesis; beta-zeacarotene biosynthesis. Catalyzes the double cyclization reaction which converts lycopene to beta-carotene and neurosporene to beta-zeacarotene. The polypeptide is Lycopene beta cyclase, chloroplastic (LCY1) (Nicotiana tabacum (Common tobacco)).